We begin with the raw amino-acid sequence, 407 residues long: [Pyruvate dehydrogenase (acetyl-transferring)] kinase isozyme 2, mitochondrial (407 aa).

The Histidine kinase domain maps to 135 to 364; it reads LEYKDTYGDD…DAVIYLKALS (230 aa). A phosphotyrosine mark is found at Tyr-215 and Tyr-216. Residues 251–258, Asp-290, 309–310, and 325–330 each bind ATP; these read ELFKNAMR, ST, and GFGYGL. Position 376 is an N6-succinyllysine (Lys-376).

Belongs to the PDK/BCKDK protein kinase family. In terms of assembly, homodimer, and heterodimer with PDK1. Interacts with the pyruvate dehydrogenase complex subunit DLAT, and is part of the multimeric pyruvate dehydrogenase complex that contains multiple copies of pyruvate dehydrogenase (E1), dihydrolipoamide acetyltransferase (DLAT, E2) and lipoamide dehydrogenase (DLD, E3). Detected in heart (at protein level). Highest level of expression in heart and skeletal muscle and the lowest in spleen and lung. Liver, kidney, brain and testis levels are intermediate.

The protein resides in the mitochondrion matrix. The enzyme catalyses L-seryl-[pyruvate dehydrogenase E1 alpha subunit] + ATP = O-phospho-L-seryl-[pyruvate dehydrogenase E1 alpha subunit] + ADP + H(+). With respect to regulation, activity increases in response to increased acetyl-CoA and NADH levels and upon binding to the pyruvate dehydrogenase subunit DLAT. Inhibited by ADP and pyruvate; these compounds interfere with DLAT binding and thereby inhibit kinase activity. Inhibited by dichloroacetate. Inhibited by AZD7545; this compound interferes with DLAT binding and thereby inhibits kinase activity. Reactive oxygen species cause the formation of disulfide bonds, and thereby inhibit the enzyme. Its function is as follows. Kinase that plays a key role in the regulation of glucose and fatty acid metabolism and homeostasis via phosphorylation of the pyruvate dehydrogenase subunits PDHA1 and PDHA2. This inhibits pyruvate dehydrogenase activity, and thereby regulates metabolite flux through the tricarboxylic acid cycle, down-regulates aerobic respiration and inhibits the formation of acetyl-coenzyme A from pyruvate. Inhibition of pyruvate dehydrogenase decreases glucose utilization and increases fat metabolism. Mediates cellular responses to insulin. Plays an important role in maintaining normal blood glucose levels and in metabolic adaptation to nutrient availability. Via its regulation of pyruvate dehydrogenase activity, plays an important role in maintaining normal blood pH and in preventing the accumulation of ketone bodies under starvation. Plays a role in the regulation of cell proliferation and in resistance to apoptosis under oxidative stress. Plays a role in p53/TP53-mediated apoptosis. This Rattus norvegicus (Rat) protein is [Pyruvate dehydrogenase (acetyl-transferring)] kinase isozyme 2, mitochondrial (Pdk2).